The chain runs to 520 residues: Cytochrome P450 monooxygenase btcC (520 aa).

A helical transmembrane segment spans residues 2 to 22; sequence IFLLTLAGLKVLSIVILFGII. Asn177 carries N-linked (GlcNAc...) asparagine glycosylation. Residue Cys448 participates in heme binding. The N-linked (GlcNAc...) asparagine glycan is linked to Asn511.

This sequence belongs to the cytochrome P450 family. Heme is required as a cofactor.

The protein resides in the membrane. The protein operates within secondary metabolite biosynthesis; terpenoid biosynthesis. In terms of biological role, cytochrome P4590 monooxygenase part of the gene cluster that mediates the biosynthesis of betaestacins. The bifunctional terpene synthase btcA converts isopentenyl diphosphate (IPP) and dimethylallyl diphosphate (DMAPP) into the sesterterpene betaestacin I. The C-terminal prenyltransferase (PT) domain of btcA catalyzes formation of GFPP, whereas the N-terminal terpene cyclase (TC) domain catalyzes the cyclization of GFPP into betaestacin I. The cytochrome P450 monooxygenase btcB oxidizes the C25 methyl group of betaestacin I to yield the carboxylic acid betaestacin IV via the alcohol betaestacin III. The cytochrome P450 monooxygenase btcC further catalyzes the multistep oxidation of betaestacin IV to produce several compounds, including betaestacins Va, Vb, Vc and VI. The polypeptide is Cytochrome P450 monooxygenase btcC (Colletotrichum orbiculare (strain 104-T / ATCC 96160 / CBS 514.97 / LARS 414 / MAFF 240422) (Cucumber anthracnose fungus)).